The sequence spans 1391 residues: DNA-directed RNA polymerase subunit beta'' (1391 aa).

Residues cysteine 224, cysteine 295, cysteine 302, and cysteine 305 each coordinate Zn(2+).

Belongs to the RNA polymerase beta' chain family. RpoC2 subfamily. In terms of assembly, in plastids the minimal PEP RNA polymerase catalytic core is composed of four subunits: alpha, beta, beta', and beta''. When a (nuclear-encoded) sigma factor is associated with the core the holoenzyme is formed, which can initiate transcription. It depends on Zn(2+) as a cofactor.

It localises to the plastid. The protein localises to the chloroplast. The catalysed reaction is RNA(n) + a ribonucleoside 5'-triphosphate = RNA(n+1) + diphosphate. In terms of biological role, DNA-dependent RNA polymerase catalyzes the transcription of DNA into RNA using the four ribonucleoside triphosphates as substrates. The protein is DNA-directed RNA polymerase subunit beta'' of Buxus microphylla (Littleleaf boxwood).